Reading from the N-terminus, the 282-residue chain is Cholesterol 25-hydroxylase-like protein 1, member 1 (282 aa).

Asparagine 3 is a glycosylation site (N-linked (GlcNAc...) asparagine). The next 3 helical transmembrane spans lie at 40–60, 85–107, and 127–147; these read FFPVLLAFSSYIIFSVPFAVL, MLRTLWTAVYNHLVFVLPAVLIT, and FSGGLGALLVFDTQYFLWHMV. The Fatty acid hydroxylase domain occupies 133-265; the sequence is ALLVFDTQYF…FSHWDKIFGT (133 aa). The Histidine box-1 motif lies at 144 to 148; sequence WHMVH. Residues 159–163 carry the Histidine box-2 motif; the sequence is HAIHH. Residues 240 to 246 carry the Histidine box-3 motif; that stretch reads AHDMHHQ.

It belongs to the sterol desaturase family. Requires Fe cation as cofactor.

The protein localises to the endoplasmic reticulum membrane. In terms of biological role, may catalyze the formation of 25-hydroxycholesterol from cholesterol. The polypeptide is Cholesterol 25-hydroxylase-like protein 1, member 1 (ch25hl1.1) (Danio rerio (Zebrafish)).